The primary structure comprises 442 residues: Gamma-glutamyl phosphate reductase (442 aa).

The protein belongs to the gamma-glutamyl phosphate reductase family.

It localises to the cytoplasm. The enzyme catalyses L-glutamate 5-semialdehyde + phosphate + NADP(+) = L-glutamyl 5-phosphate + NADPH + H(+). It participates in amino-acid biosynthesis; L-proline biosynthesis; L-glutamate 5-semialdehyde from L-glutamate: step 2/2. In terms of biological role, catalyzes the NADPH-dependent reduction of L-glutamate 5-phosphate into L-glutamate 5-semialdehyde and phosphate. The product spontaneously undergoes cyclization to form 1-pyrroline-5-carboxylate. In Campylobacter curvus (strain 525.92), this protein is Gamma-glutamyl phosphate reductase.